The sequence spans 293 residues: Small ribosomal subunit biogenesis GTPase RsgA (293 aa).

The CP-type G domain occupies 63–223 (QNELVRPPVA…VADTPGFSAL (161 aa)). GTP is bound by residues 112-115 (SKID) and 166-174 (GQSGVGKSS). Residues cysteine 247, cysteine 252, histidine 254, and cysteine 260 each contribute to the Zn(2+) site.

Belongs to the TRAFAC class YlqF/YawG GTPase family. RsgA subfamily. Monomer. Associates with 30S ribosomal subunit, binds 16S rRNA. Requires Zn(2+) as cofactor.

Its subcellular location is the cytoplasm. In terms of biological role, one of several proteins that assist in the late maturation steps of the functional core of the 30S ribosomal subunit. Helps release RbfA from mature subunits. May play a role in the assembly of ribosomal proteins into the subunit. Circularly permuted GTPase that catalyzes slow GTP hydrolysis, GTPase activity is stimulated by the 30S ribosomal subunit. The sequence is that of Small ribosomal subunit biogenesis GTPase RsgA from Geobacillus thermodenitrificans (strain NG80-2).